Consider the following 337-residue polypeptide: Junctional sarcoplasmic reticulum protein 1 (337 aa).

Positions 1-84 (MATRAMEELD…EKEPVSKVTS (84 aa)) are mediates interaction with CACNA1S. Disordered regions lie at residues 23–125 (SALA…ELPW) and 159–337 (EAPA…KGRD). Basic and acidic residues-rich tracts occupy residues 49-59 (SRSHDSQERVT) and 69-79 (TKPKKMEKEPV). The span at 165–180 (PESWASSSSSPKGPAS) shows a compositional bias: low complexity. Residues 199 to 213 (SKLEERVQIPRSEEA) are compositionally biased toward basic and acidic residues. Residues 214 to 225 (AEKDEWESEEAA) are compositionally biased toward acidic residues. Basic and acidic residues-rich tracts occupy residues 236-277 (GPKE…RGAR), 285-309 (RRWEAREGGHRPWGRDSGAPEDRKR), and 316-325 (RRPDEEDRPL). A compositionally biased stretch (basic residues) spans 326–337 (GRQKRRAGKGRD).

Interacts with CACNA1S, CACNB1 and calsequestrin.

It is found in the sarcoplasmic reticulum membrane. The protein resides in the endoplasmic reticulum membrane. Its function is as follows. Involved in skeletal muscle excitation/contraction coupling (EC), probably acting as a regulator of the voltage-sensitive calcium channel CACNA1S. EC is a physiological process whereby an electrical signal (depolarization of the plasma membrane) is converted into a chemical signal, a calcium gradient, by the opening of ryanodine receptor calcium release channels. May regulate CACNA1S membrane targeting and activity. The chain is Junctional sarcoplasmic reticulum protein 1 (JSRP1) from Bos taurus (Bovine).